A 184-amino-acid chain; its full sequence is MRTLLASPRGALVKDDRLLPFLLRGKTLVTVGDVTTKRCLELGLVPRTAIFDGKTRRSQWVELRAPNGVLKAFNPPGQICLDAAKVVKKAILTSTWVKVEGEEDLLAIPALLSSENGWALLYGQPKAGVVLVEINKYTKLHFLEIIKMFDGDVEEFLREFDYDPNQPLLGELDERLYDLLFPEL.

GTP-binding residues include Asp-33, Val-34, Asp-52, Lys-54, and Glu-103.

The protein belongs to the GTP-dependent DPCK family.

It carries out the reaction 3'-dephospho-CoA + GTP = GDP + CoA + H(+). It participates in cofactor biosynthesis; coenzyme A biosynthesis. In terms of biological role, catalyzes the GTP-dependent phosphorylation of the 3'-hydroxyl group of dephosphocoenzyme A to form coenzyme A (CoA). The protein is GTP-dependent dephospho-CoA kinase of Ignicoccus hospitalis (strain KIN4/I / DSM 18386 / JCM 14125).